We begin with the raw amino-acid sequence, 180 residues long: NEDD8-conjugating enzyme ubc-12 (180 aa).

In terms of domain architecture, UBC core spans 24–180; that stretch reads VRDKLLAQEL…RVREYISRYC (157 aa). Catalysis depends on C112, which acts as the Glycyl thioester intermediate.

The protein belongs to the ubiquitin-conjugating enzyme family. UBC12 subfamily.

The protein resides in the cytoplasm. It carries out the reaction [E1 NEDD8-activating enzyme]-S-[NEDD8 protein]-yl-L-cysteine + [E2 NEDD8-conjugating enzyme]-L-cysteine = [E1 NEDD8-activating enzyme]-L-cysteine + [E2 NEDD8-conjugating enzyme]-S-[NEDD8-protein]-yl-L-cysteine.. It functions in the pathway protein modification; protein neddylation. Functionally, accepts the ubiquitin-like protein NEDD8 from the uba-3-ula-1 E1 complex and catalyzes its covalent attachment to other proteins. Plays a role in male tail tip morphogenesis. The sequence is that of NEDD8-conjugating enzyme ubc-12 from Caenorhabditis elegans.